The sequence spans 377 residues: MNNTEFYDRLGVSKDASQDEIKKAYRKMSKKYHPDINKEPGAEQKYKDVQEAYETLSDAQKRSAYDQYGAAGAQGGFGGGGFGGFDGGGFGGFEDIFSSFFGGGGGMRNPNAPRQGDDLQYRVNLTFEEAIFGVEKDVSYHREATCHTCAGSGAKPGTSPVTCGRCHGSGVINVDTQTPLGMMRRQVTCDVCHGSGKEIKEPCQTCHGTGHEKETHKVSVKIPAGVETGQQIRLQGQGEAGFNGGPYGDLFVVLNVLPSQKFERNGSTIYYNLNISFVQAALGDTVDIPTVHGDVEMAIPAGTQTGKVFRLKGKGAPKLRGAGQGDQHVTVNIVTPTKLNEKQKEALRAFAEASGQEISTPKKKGFFDKMKDALEDI.

The region spanning 5-69 is the J domain; the sequence is EFYDRLGVSK…QKRSAYDQYG (65 aa). A CR-type zinc finger spans residues 133–215; sequence GVEKDVSYHR…CHGTGHEKET (83 aa). Zn(2+)-binding residues include Cys146, Cys149, Cys163, Cys166, Cys189, Cys192, Cys203, and Cys206. CXXCXGXG motif repeat units lie at residues 146 to 153, 163 to 170, 189 to 196, and 203 to 210; these read CHTCAGSG, CGRCHGSG, CDVCHGSG, and CQTCHGTG.

This sequence belongs to the DnaJ family. As to quaternary structure, homodimer. It depends on Zn(2+) as a cofactor.

It localises to the cytoplasm. Functionally, participates actively in the response to hyperosmotic and heat shock by preventing the aggregation of stress-denatured proteins and by disaggregating proteins, also in an autonomous, DnaK-independent fashion. Unfolded proteins bind initially to DnaJ; upon interaction with the DnaJ-bound protein, DnaK hydrolyzes its bound ATP, resulting in the formation of a stable complex. GrpE releases ADP from DnaK; ATP binding to DnaK triggers the release of the substrate protein, thus completing the reaction cycle. Several rounds of ATP-dependent interactions between DnaJ, DnaK and GrpE are required for fully efficient folding. Also involved, together with DnaK and GrpE, in the DNA replication of plasmids through activation of initiation proteins. This Streptococcus uberis (strain ATCC BAA-854 / 0140J) protein is Chaperone protein DnaJ.